Consider the following 802-residue polypeptide: Nuclear polyadenylated RNA-binding protein 3 (802 aa).

2 disordered regions span residues 1 to 174 (MSDE…RRET) and 252 to 293 (ALSV…RMRF). The segment covering 22–34 (SNSNENELMNNSS) has biased composition (low complexity). A compositionally biased stretch (acidic residues) spans 37–73 (DGIEFDAPEEEREAEREEENEEQHELEDVNDEEEEDK). At threonine 86 the chain carries Phosphothreonine. Acidic residues-rich tracts occupy residues 101–139 (DDDD…EEGN) and 149–158 (AAEDGEDEED). The span at 159–174 (KKDKTKDKEVELRRET) shows a compositional bias: basic and acidic residues. Over residues 260-276 (STISTTASASATSGARS) the composition is skewed to low complexity. The span at 277–293 (NDQRKPPLSDAQRRMRF) shows a compositional bias: basic and acidic residues. The region spanning 330–401 (SRLFIGNLPL…KKLILEVSSS (72 aa)) is the RRM domain. Threonine 451 carries the phosphothreonine modification. 2 disordered regions span residues 571–675 (IYGA…PMDQ) and 717–802 (MQGQ…KLQK). The segment covering 575 to 590 (PPLPVPNGPAVGPPPQ) has biased composition (pro residues). The segment covering 593–614 (YYQGYSMPPPQQQQQQPYGNYG) has biased composition (low complexity). Polar residues predominate over residues 632–642 (MNQSYGRYQTS). 2 stretches are compositionally biased toward low complexity: residues 651–661 (QIPQGYGRYQA) and 717–738 (MQGQ…MNSS). A compositionally biased stretch (polar residues) spans 745–754 (TNYNGQNISA). A compositionally biased stretch (pro residues) spans 757–769 (SAPPMSHQPPPPQ). A compositionally biased stretch (low complexity) spans 770-785 (QQQQQQQQQQQQQQQP).

It is found in the nucleus. Its subcellular location is the nucleoplasm. In terms of biological role, may be required for packaging pre-mRNAs into ribonucleoprotein structures amenable to efficient nuclear RNA processing. Binds to poly(A)+ RNA. Appears to act in the maintenance of CLN3 mRNA levels. This is Nuclear polyadenylated RNA-binding protein 3 (NAB3) from Saccharomyces cerevisiae (strain ATCC 204508 / S288c) (Baker's yeast).